We begin with the raw amino-acid sequence, 783 residues long: BMP/retinoic acid-inducible neural-specific protein 2 (783 aa).

The N-terminal stretch at 1 to 33 (MRWQCGTRFRGLRPAVAPWTALLALGLPGWVLA) is a signal peptide. The MACPF domain occupies 85-281 (RYRIYREFAR…FVAAALSYIT (197 aa)). Residues Asn185, Asn354, Asn473, Asn579, Asn626, and Asn658 are each glycosylated (N-linked (GlcNAc...) asparagine).

It belongs to the BRINP family.

It is found in the secreted. Inhibits neuronal cell proliferation by negative regulation of the cell cycle transition. The polypeptide is BMP/retinoic acid-inducible neural-specific protein 2 (BRINP2) (Homo sapiens (Human)).